A 181-amino-acid chain; its full sequence is Large ribosomal subunit protein uL5 (181 aa).

Belongs to the universal ribosomal protein uL5 family. As to quaternary structure, part of the 50S ribosomal subunit; part of the 5S rRNA/L5/L18/L25 subcomplex. Contacts the 5S rRNA and the P site tRNA. Forms a bridge to the 30S subunit in the 70S ribosome.

Its function is as follows. This is one of the proteins that bind and probably mediate the attachment of the 5S RNA into the large ribosomal subunit, where it forms part of the central protuberance. In the 70S ribosome it contacts protein S13 of the 30S subunit (bridge B1b), connecting the 2 subunits; this bridge is implicated in subunit movement. Contacts the P site tRNA; the 5S rRNA and some of its associated proteins might help stabilize positioning of ribosome-bound tRNAs. This is Large ribosomal subunit protein uL5 from Mesomycoplasma hyopneumoniae (strain 7448) (Mycoplasma hyopneumoniae).